Reading from the N-terminus, the 106-residue chain is A-type ATP synthase subunit F (106 aa).

Belongs to the V-ATPase F subunit family. Has multiple subunits with at least A(3), B(3), C, D, E, F, H, I and proteolipid K(x).

It is found in the cell membrane. Functionally, component of the A-type ATP synthase that produces ATP from ADP in the presence of a proton gradient across the membrane. This is A-type ATP synthase subunit F from Methanothermobacter thermautotrophicus (strain ATCC 29096 / DSM 1053 / JCM 10044 / NBRC 100330 / Delta H) (Methanobacterium thermoautotrophicum).